The following is a 292-amino-acid chain: Cyclic dipurine nucleotide synthase (292 aa).

Residue Q47 coordinates ATP. Residue 48–52 participates in GTP binding; the sequence is GSYRN. The Mg(2+) site is built by D61 and D63. Residues D63, 121–122, and D136 contribute to the ATP site; that span reads NK. Position 136 (D136) interacts with Mg(2+). 2 residues coordinate GTP: K197 and S216.

This sequence belongs to the CD-NTase family. E01 subfamily. The cofactor is Mg(2+).

The catalysed reaction is 2 ATP = 3',3'-c-di-AMP + 2 diphosphate. It catalyses the reaction 2 GTP = 3',3'-c-di-GMP + 2 diphosphate. The enzyme catalyses GTP + ATP = 3',3'-cGAMP + 2 diphosphate. Cyclic nucleotide synthase (second messenger synthase) of a CBASS antivirus system. CBASS (cyclic oligonucleotide-based antiphage signaling system) provides immunity against bacteriophage. The CD-NTase protein synthesizes cyclic nucleotides in response to infection; these serve as specific second messenger signals. The signals activate a diverse range of effectors, leading to bacterial cell death and thus abortive phage infection. A type I-A(GA) CBASS system. In terms of biological role, cyclic dinucleotide synthase that catalyzes the synthesis of 3'3'-cyclic GMP-AMP (cGAMP) from GTP and ATP, and of c-di-AMP and c-di-GMP, that are second messengers for cell signal transduction. This is Cyclic dipurine nucleotide synthase from Elizabethkingia meningoseptica (Chryseobacterium meningosepticum).